Here is a 290-residue protein sequence, read N- to C-terminus: Microtubule-associated protein P320 (290 aa).

Repeats lie at residues 1 to 38, 39 to 76, 77 to 114, 115 to 152, 153 to 190, 191 to 228, 229 to 266, and 267 to 290; these read SEYR…PIDP and SEYR…DESH. The tract at residues 251 to 290 is disordered; it reads SHFLTTTHEAYKPIDPSEYRQKRTVGEEVTTDMRHVDESH. A compositionally biased stretch (basic and acidic residues) spans 259–290; it reads EAYKPIDPSEYRQKRTVGEEVTTDMRHVDESH.

It is found in the cytoplasm. It localises to the cytoskeleton. This chain is Microtubule-associated protein P320, found in Trypanosoma brucei brucei.